A 214-amino-acid polypeptide reads, in one-letter code: Adenylate kinase (214 aa).

10–15 (GAGKGT) provides a ligand contact to ATP. Residues 30–59 (STGDMLRAAIKAGSELGQKAKILMDMGQLV) are NMP. Residues threonine 31, arginine 36, 57–59 (QLV), 85–88 (GFPR), and glutamine 92 each bind AMP. The tract at residues 122 to 159 (GRRVHPASGRTYHIVYNPPKVEDKDDITGEDLILRADD) is LID. ATP-binding positions include arginine 123 and 132-133 (TY). AMP is bound by residues arginine 156 and arginine 167. ATP is bound at residue glutamine 200.

The protein belongs to the adenylate kinase family. In terms of assembly, monomer.

It is found in the cytoplasm. The catalysed reaction is AMP + ATP = 2 ADP. The protein operates within purine metabolism; AMP biosynthesis via salvage pathway; AMP from ADP: step 1/1. In terms of biological role, catalyzes the reversible transfer of the terminal phosphate group between ATP and AMP. Plays an important role in cellular energy homeostasis and in adenine nucleotide metabolism. The protein is Adenylate kinase of Histophilus somni (strain 129Pt) (Haemophilus somnus).